The primary structure comprises 176 residues: Flavodoxin-like domain-containing protein BilS (176 aa).

Its pathway is porphyrin-containing compound metabolism; protoheme degradation. In terms of biological role, together with BilR, catalyzes reduction of mesobilirubin and/or bilirubin to urobilinogen, a key step during heme degradation. BilS is probably involved in electron transfer for the bilirubin reductase BilR. The polypeptide is Flavodoxin-like domain-containing protein BilS (Clostridioides difficile (strain CD3)).